A 320-amino-acid polypeptide reads, in one-letter code: Beta-ketoacyl-[acyl-carrier-protein] synthase III (320 aa).

Active-site residues include C114 and H247. The interval 248 to 252 (QANRR) is ACP-binding. N277 is an active-site residue.

The protein belongs to the thiolase-like superfamily. FabH family. As to quaternary structure, homodimer.

Its subcellular location is the cytoplasm. It catalyses the reaction malonyl-[ACP] + acetyl-CoA + H(+) = 3-oxobutanoyl-[ACP] + CO2 + CoA. The protein operates within lipid metabolism; fatty acid biosynthesis. Its function is as follows. Catalyzes the condensation reaction of fatty acid synthesis by the addition to an acyl acceptor of two carbons from malonyl-ACP. Catalyzes the first condensation reaction which initiates fatty acid synthesis and may therefore play a role in governing the total rate of fatty acid production. Possesses both acetoacetyl-ACP synthase and acetyl transacylase activities. Its substrate specificity determines the biosynthesis of branched-chain and/or straight-chain of fatty acids. This Neisseria meningitidis serogroup A / serotype 4A (strain DSM 15465 / Z2491) protein is Beta-ketoacyl-[acyl-carrier-protein] synthase III.